We begin with the raw amino-acid sequence, 876 residues long: MATERYNPRDAEPRWQQKWNEDKVFETDNADPREKYYVLEMFPYPSGRIHMGHVRNYAMGDVVARYKRARGYNVLHPMGWDAFGMPAENAAMERGVHPASWTYQNIASMKAQLKAMGLSLDWSREFATCDVEYYQHQQHLFLDFLEKGLVYRKQSKVNWDPVDNTVLANEQVIDGRGWRSGALVEQRELTQWFFKITDFSQDLLDALDTLDQWPEKVRLMQKNWIGRSEGLTVRWEIVPETAPAGETEITVYTTRPDTLFGASFLAIAADHPLAKDAAAKNVEIEAFCEECRRAGTSLAALETAEKKGLDTGIRVRHPLDPTWELPVYIANFVLMDYGTGAIFGCPSGDQRDLDFARKYGLPVVAVVMPSDGDAASFAVGDTAYDGDGVMINSRFLDGKTTEEAFNIVADRLSAASLGNTPVAERKVNFRLRDWGISRQRYWGCPIPVIHCDACGVVPVPKTDLPVKLPEDVTFDQPGNPLDRHPTWRHVTCPHCGKDARRETDTMDTFVDSSWYFTRFTAPWEAKPTDPEAANRWLPVDQYIGGIEHAILHLLYSRFFTRAMRETGHVAASEPFKGLFTQGMVVHETYSRKAGAGREWVAPADIRIEEIDGKRRALLLATGEEVAIGSIEKMSKSKKNVVDPDDIIASYGADTARFFVLSDSPPERDVIWSEAGVEGAHRFTQRLWRLISEAAGVLSTVAAAPASEGEALAISQAAHKTLKAVQNDYDKLWFNKAVARIYELVNALAAPLTKVAAGEGDIAYRAAVRDAAEILIQLVAPMTPHLAEECWATLGNTGLLARTGWPRFVEALVVENDVVLPVQINGKKRAELTISRDADQNAVTDAVLELDAVKNVLNGQAPKKIIVVPQRIVNIVV.

Positions 43 to 53 (PYPSGRIHMGH) match the 'HIGH' region motif. Positions 632 to 636 (KMSKS) match the 'KMSKS' region motif. Lys-635 lines the ATP pocket.

The protein belongs to the class-I aminoacyl-tRNA synthetase family.

The protein resides in the cytoplasm. It catalyses the reaction tRNA(Leu) + L-leucine + ATP = L-leucyl-tRNA(Leu) + AMP + diphosphate. This chain is Leucine--tRNA ligase, found in Rhizobium etli (strain CIAT 652).